A 218-amino-acid chain; its full sequence is Elongation factor Ts (218 aa).

The segment at 82-85 (TDFV) is involved in Mg(2+) ion dislocation from EF-Tu.

It belongs to the EF-Ts family.

The protein localises to the cytoplasm. Functionally, associates with the EF-Tu.GDP complex and induces the exchange of GDP to GTP. It remains bound to the aminoacyl-tRNA.EF-Tu.GTP complex up to the GTP hydrolysis stage on the ribosome. The sequence is that of Elongation factor Ts from Prochlorococcus marinus (strain AS9601).